We begin with the raw amino-acid sequence, 729 residues long: Phosphoribosylformylglycinamidine synthase subunit PurL (729 aa).

Residue His-54 is part of the active site. Positions 57 and 96 each coordinate ATP. Glu-98 lines the Mg(2+) pocket. Substrate-binding positions include 99 to 102 (SHNH) and Arg-121. The active-site Proton acceptor is His-100. Asp-122 contacts Mg(2+). Residue Gln-245 coordinates substrate. Asp-273 is a Mg(2+) binding site. 317–319 (ETQ) serves as a coordination point for substrate. ATP contacts are provided by Asp-495 and Gly-532. Residue Asn-533 coordinates Mg(2+). Ser-535 is a binding site for substrate.

The protein belongs to the FGAMS family. In terms of assembly, monomer. Part of the FGAM synthase complex composed of 1 PurL, 1 PurQ and 2 PurS subunits.

The protein localises to the cytoplasm. It catalyses the reaction N(2)-formyl-N(1)-(5-phospho-beta-D-ribosyl)glycinamide + L-glutamine + ATP + H2O = 2-formamido-N(1)-(5-O-phospho-beta-D-ribosyl)acetamidine + L-glutamate + ADP + phosphate + H(+). Its pathway is purine metabolism; IMP biosynthesis via de novo pathway; 5-amino-1-(5-phospho-D-ribosyl)imidazole from N(2)-formyl-N(1)-(5-phospho-D-ribosyl)glycinamide: step 1/2. Part of the phosphoribosylformylglycinamidine synthase complex involved in the purines biosynthetic pathway. Catalyzes the ATP-dependent conversion of formylglycinamide ribonucleotide (FGAR) and glutamine to yield formylglycinamidine ribonucleotide (FGAM) and glutamate. The FGAM synthase complex is composed of three subunits. PurQ produces an ammonia molecule by converting glutamine to glutamate. PurL transfers the ammonia molecule to FGAR to form FGAM in an ATP-dependent manner. PurS interacts with PurQ and PurL and is thought to assist in the transfer of the ammonia molecule from PurQ to PurL. This chain is Phosphoribosylformylglycinamidine synthase subunit PurL, found in Staphylococcus carnosus (strain TM300).